Here is a 373-residue protein sequence, read N- to C-terminus: Cathecol O-methyltransferase 1 (373 aa).

Residues Gly209, Asp232, Asp252, Met253, Met265, and Lys266 each coordinate S-adenosyl-L-homocysteine. Asp232 provides a ligand contact to S-adenosyl-L-methionine. His279 serves as the catalytic Proton acceptor.

This sequence belongs to the class I-like SAM-binding methyltransferase superfamily. Cation-independent O-methyltransferase family. COMT subfamily.

The catalysed reaction is catechol + S-adenosyl-L-methionine = guaiacol + S-adenosyl-L-homocysteine + H(+). Its function is as follows. O-methyltransferase that catalyzes the conversion of catechol to guaiacol. Involved in the production of guaiacol in fruits. In Solanum lycopersicum (Tomato), this protein is Cathecol O-methyltransferase 1.